Reading from the N-terminus, the 420-residue chain is Dynein axonemal assembly factor 4 (420 aa).

Residues 3 to 87 (VRVSEFSWQQ…KEPVLWESLS (85 aa)) form the CS domain. Residues 7–103 (EFSWQQTPAA…EMMQRIREKS (97 aa)) are mediates interaction with ESR1 and STUB1. The segment covering 165–192 (CQKKADGQKRVQRKEKPLQGKQAEERGA) has biased composition (basic and acidic residues). Residues 165–212 (CQKKADGQKRVQRKEKPLQGKQAEERGALKPQSLPRKAPPTRLPTRGR) are disordered. TPR repeat units follow at residues 288 to 321 (PDWL…NRKI), 323 to 355 (VLYL…LTPP), and 364 to 397 (MKAH…DPAN).

As to quaternary structure, interacts with ZMYND10. Interacts with STUB1. Interacts with ESR1 and ESR2. Interacts with DNAAF2. Interacts with CCT3, CCT4, CCT5 and CCT8. Interacts with DNAAF6/PIH1D3.

Its subcellular location is the nucleus. The protein localises to the cytoplasm. It is found in the cell projection. It localises to the neuron projection. The protein resides in the dynein axonemal particle. Functionally, involved in neuronal migration during development of the cerebral neocortex. May regulate the stability and proteasomal degradation of the estrogen receptors that play an important role in neuronal differentiation, survival and plasticity. Axonemal dynein assembly factor required for ciliary motility. This Rattus norvegicus (Rat) protein is Dynein axonemal assembly factor 4.